The following is a 351-amino-acid chain: MTIDAALAEQIRRTPKAELHVHIEGTLEPELIFRLAQRNQVALPYPSVDALRAAYAFTDLQSFLDIYYAGASVLLTEEDFFDMTMDYVKRAVADNVRHAEIFFDPQTHTARGVPIGVVIDGIADALAQARTEYDFSSSLILCFLRHLSEEDAFATLEAALPYRDRFVGVGLDSSEKGNPPEKFARVFARARELGLHLVAHAGEEGPAQYVADALDILKAERIDHGVRAIDDAALVERLARERVALTVCPLSNVKLKVYPDLRDHPLKRMLDAGVAITLHSDDPAYFGGYMNANWEATFDALPLDAADAHKLARNSFEAAFLPAMQKAEFLAEVDHFWSAPPKSPPATAPAA.

Residues His-20, His-22, and His-200 each contribute to the Zn(2+) site. Glu-203 (proton donor) is an active-site residue. A Zn(2+)-binding site is contributed by Asp-281. Asp-282 contacts substrate.

Belongs to the metallo-dependent hydrolases superfamily. Adenosine and AMP deaminases family. Adenine deaminase type 2 subfamily. Requires Zn(2+) as cofactor.

It catalyses the reaction adenine + H2O + H(+) = hypoxanthine + NH4(+). Functionally, catalyzes the hydrolytic deamination of adenine to hypoxanthine. Plays an important role in the purine salvage pathway and in nitrogen catabolism. The polypeptide is Adenine deaminase (Cupriavidus taiwanensis (strain DSM 17343 / BCRC 17206 / CCUG 44338 / CIP 107171 / LMG 19424 / R1) (Ralstonia taiwanensis (strain LMG 19424))).